We begin with the raw amino-acid sequence, 258 residues long: Shikimate dehydrogenase (NADP(+)) (258 aa).

Residues 14-16 (SES) and Thr-61 contribute to the shikimate site. The active-site Proton acceptor is Lys-65. The shikimate site is built by Asn-86 and Asp-101. NADP(+) contacts are provided by residues 125-129 (GSGGS) and Leu-211. Tyr-213 is a shikimate binding site. Position 234 (Gly-234) interacts with NADP(+).

The protein belongs to the shikimate dehydrogenase family. As to quaternary structure, homodimer.

The catalysed reaction is shikimate + NADP(+) = 3-dehydroshikimate + NADPH + H(+). Its pathway is metabolic intermediate biosynthesis; chorismate biosynthesis; chorismate from D-erythrose 4-phosphate and phosphoenolpyruvate: step 4/7. Involved in the biosynthesis of the chorismate, which leads to the biosynthesis of aromatic amino acids. Catalyzes the reversible NADPH linked reduction of 3-dehydroshikimate (DHSA) to yield shikimate (SA). This Clostridium botulinum (strain Loch Maree / Type A3) protein is Shikimate dehydrogenase (NADP(+)).